We begin with the raw amino-acid sequence, 274 residues long: Penicillin-insensitive murein endopeptidase (274 aa).

The first 19 residues, 1–19, serve as a signal peptide directing secretion; it reads MNKTAIALLALLASSASLA. Cystine bridges form between cysteine 44–cysteine 265, cysteine 187–cysteine 235, and cysteine 216–cysteine 223. Zn(2+)-binding residues include histidine 110, histidine 113, aspartate 120, aspartate 147, histidine 150, and histidine 211. The segment at 227-274 is disordered; sequence PLPPPGDGCGAELQSWFEPPKPGTTKPEKKTPPPLPPSCQALLDEHVI.

It belongs to the peptidase M74 family. Dimer. The cofactor is Zn(2+).

The protein localises to the periplasm. In terms of biological role, murein endopeptidase that cleaves the D-alanyl-meso-2,6-diamino-pimelyl amide bond that connects peptidoglycan strands. Likely plays a role in the removal of murein from the sacculus. The protein is Penicillin-insensitive murein endopeptidase of Escherichia coli (strain SE11).